The sequence spans 344 residues: Krueppel-like factor 3 (344 aa).

Residues 1-74 are repressor domain; it reads MLMFDPVPVK…TVNKRGSPPA (74 aa). A Glycyl lysine isopeptide (Lys-Gly) (interchain with G-Cter in SUMO) cross-link involves residue K10. Residues 60–68 carry the 9aaTAD; inactive motif; the sequence is EPVDLTVNK. The short motif at 61-65 is the CTBP-binding motif element; the sequence is PVDLT. The interval 66–111 is disordered; the sequence is VNKRGSPPAAGGSPSSLKFPSHRRASPGLSMPSSSPPIKKYSPPSP. K68 participates in a covalent cross-link: Glycyl lysine isopeptide (Lys-Gly) (interchain with G-Cter in SUMO2). 2 stretches are compositionally biased toward low complexity: residues 70–81 and 91–107; these read GSPPAAGGSPSS and SPGL…KKYS. Phosphoserine occurs at positions 71, 91, 100, 107, and 110. Residue K195 forms a Glycyl lysine isopeptide (Lys-Gly) (interchain with G-Cter in SUMO2) linkage. K197 is covalently cross-linked (Glycyl lysine isopeptide (Lys-Gly) (interchain with G-Cter in SUMO); alternate). K197 is covalently cross-linked (Glycyl lysine isopeptide (Lys-Gly) (interchain with G-Cter in SUMO2); alternate). Phosphoserine occurs at positions 215, 223, and 249. The interval 235-254 is disordered; sequence SVIVQPGKRPLPVESPDTQR. 3 C2H2-type zinc fingers span residues 259–283, 289–313, and 319–341; these read HRCD…RRTH, YKCT…FRKH, and FQCP…RKRH.

It belongs to the krueppel C2H2-type zinc-finger protein family. In terms of assembly, monomer. Sumoylated with SUMO1. Sumoylation is enhanced by PIAS1, PIAS2alpha and PIAS2beta, and PIAS4, but not by Pc2. Enhances transcriptional repression, but has no effect on DNA binding. Sumoylation on Lys-197 is the major site. In terms of tissue distribution, in 8.5 day embryos, expressed in midbrain, anterior hindbrain and ventral forebrain. In 9 day embryos, expressed throughout ventral anterior half of embryo including midbrain-hindbrain junction, ventral midbrain, diencephalon and forebrain. At 10.5 days, distribution is more widespread with expression also found in developing limb buds. Widely expressed in the adult.

It localises to the nucleus. In terms of biological role, binds to the CACCC box of erythroid cell-expressed genes. May play a role in hematopoiesis. This chain is Krueppel-like factor 3 (Klf3), found in Mus musculus (Mouse).